The primary structure comprises 72 residues: Translation initiation factor IF-1 (72 aa).

One can recognise an S1-like domain in the interval 1 to 72; that stretch reads MAKEDVIEVE…NRGRIVYRYK (72 aa).

The protein belongs to the IF-1 family. As to quaternary structure, component of the 30S ribosomal translation pre-initiation complex which assembles on the 30S ribosome in the order IF-2 and IF-3, IF-1 and N-formylmethionyl-tRNA(fMet); mRNA recruitment can occur at any time during PIC assembly.

It localises to the cytoplasm. Functionally, one of the essential components for the initiation of protein synthesis. Stabilizes the binding of IF-2 and IF-3 on the 30S subunit to which N-formylmethionyl-tRNA(fMet) subsequently binds. Helps modulate mRNA selection, yielding the 30S pre-initiation complex (PIC). Upon addition of the 50S ribosomal subunit IF-1, IF-2 and IF-3 are released leaving the mature 70S translation initiation complex. In Moorella thermoacetica (strain ATCC 39073 / JCM 9320), this protein is Translation initiation factor IF-1.